A 78-amino-acid chain; its full sequence is MANVKFKVKKGDTVKIIAGDDKGKTGKILAVLAKKGQVIVEGCKVAKKAIKPSEKTPNGGHVNKEMPIDISNVAKVEG.

A disordered region spans residues 52-78 (PSEKTPNGGHVNKEMPIDISNVAKVEG).

The protein belongs to the universal ribosomal protein uL24 family. As to quaternary structure, part of the 50S ribosomal subunit.

Its function is as follows. One of two assembly initiator proteins, it binds directly to the 5'-end of the 23S rRNA, where it nucleates assembly of the 50S subunit. One of the proteins that surrounds the polypeptide exit tunnel on the outside of the subunit. The protein is Large ribosomal subunit protein uL24 of Campylobacter concisus (strain 13826).